The sequence spans 378 residues: Outer membrane porin C (378 aa).

Positions 1-21 are cleaved as a signal peptide; sequence MKVKVLSLLVPALLVAGAANA.

It belongs to the Gram-negative porin family. As to quaternary structure, homotrimer.

The protein resides in the cell outer membrane. In terms of biological role, forms pores that allow passive diffusion of small molecules across the outer membrane. The protein is Outer membrane porin C (ompC) of Salmonella typhimurium (strain LT2 / SGSC1412 / ATCC 700720).